The primary structure comprises 426 residues: Histidine--tRNA ligase (426 aa).

This sequence belongs to the class-II aminoacyl-tRNA synthetase family. In terms of assembly, homodimer.

It is found in the cytoplasm. The catalysed reaction is tRNA(His) + L-histidine + ATP = L-histidyl-tRNA(His) + AMP + diphosphate + H(+). This is Histidine--tRNA ligase from Streptococcus pyogenes serotype M5 (strain Manfredo).